The primary structure comprises 423 residues: uncharacterized protein (423 aa).

It belongs to the IIV-6 198R family.

This is an uncharacterized protein from Aedes vexans (Inland floodwater mosquito).